We begin with the raw amino-acid sequence, 470 residues long: Zinc finger and BTB domain-containing protein 8A.1-A (470 aa).

The 69-residue stretch at 24–92 (CDCHIIVEGQ…VYSGKLPLSG (69 aa)) folds into the BTB domain. A disordered region spans residues 260 to 280 (EDEDAASHSWPESPQQESLDQ). Residues 269 to 278 (WPESPQQESL) are compositionally biased toward polar residues. 2 consecutive C2H2-type zinc fingers follow at residues 316–338 (FKCPFCTHTVKRKADLKRHLRCH) and 344–367 (YPCEACGKRFTRLEHLRNHFQTIH). Positions 439-450 (GRKENGSERAES) are enriched in basic and acidic residues. Positions 439–470 (GRKENGSERAESDLAIQEVVDSEDDELKEKQD) are disordered.

The protein resides in the nucleus. May be involved in transcriptional regulation. The polypeptide is Zinc finger and BTB domain-containing protein 8A.1-A (zbtb8a.1-a) (Xenopus laevis (African clawed frog)).